The sequence spans 413 residues: Phosphatidylcholine:ceramide cholinephosphotransferase 1 (413 aa).

The region spanning 7-70 (WSPKKVADWL…LDMIETLKME (64 aa)) is the SAM domain. Ser8 is subject to Phosphoserine. 5 helical membrane-spanning segments follow: residues 136–156 (FLAF…ISVV), 184–204 (FSIC…QWLL), 215–235 (FFCI…VTTL), 276–296 (MCGD…YLFI), and 304–324 (LWWY…CILL). His285 is an active-site residue. Over 325-413 (AHDHYTVDVV…VKYSRLVNDT (89 aa)) the chain is Cytoplasmic. Catalysis depends on residues His328 and Asp332.

Belongs to the sphingomyelin synthase family. Brain, heart, kidney, liver, muscle and stomach.

Its subcellular location is the golgi apparatus membrane. It catalyses the reaction an N-acylsphing-4-enine + a 1,2-diacyl-sn-glycero-3-phosphocholine = a sphingomyelin + a 1,2-diacyl-sn-glycerol. The catalysed reaction is an N-acylsphinganine + a 1,2-diacyl-sn-glycero-3-phosphocholine = an N-acylsphinganine-1-phosphocholine + a 1,2-diacyl-sn-glycerol. The enzyme catalyses an N-acyl-(4R)-4-hydroxysphinganine + a 1,2-diacyl-sn-glycero-3-phosphocholine = an N-acyl-(4R)-4-hydroxysphinganine-phosphocholine + a 1,2-diacyl-sn-glycerol. It carries out the reaction 1-(9Z-octadecenoyl)-2-acyl-sn-3-glycerol + a sphingomyelin = a 1-(9Z-octadecenoyl)-2-acyl-sn-glycero-3-phosphocholine + an N-acylsphing-4-enine. It catalyses the reaction N-hexadecanoylsphinganine + a 1,2-diacyl-sn-glycero-3-phosphocholine = N-hexadecanoyl-sphinganine-1-phosphocholine + a 1,2-diacyl-sn-glycerol. The catalysed reaction is N-hexadecanoyl-(4R)-hydroxysphinganine + a 1,2-diacyl-sn-glycero-3-phosphocholine = N-hexadecanoyl-(4R)-hydroxysphinganine-phosphocholine + a 1,2-diacyl-sn-glycerol. The enzyme catalyses an N-acylsphing-4-enine + a 1,2-diacyl-sn-glycero-3-phosphoethanolamine = an N-acylsphing-4-enine 1-phosphoethanolamine + a 1,2-diacyl-sn-glycerol. It functions in the pathway sphingolipid metabolism. With respect to regulation, inhibited by bacterial PC-phospholipase C inhibitor D609. Its function is as follows. Major sphingomyelin synthase at the Golgi apparatus. Catalyzes the reversible transfer of phosphocholine moiety in sphingomyelin biosynthesis: in the forward reaction transfers phosphocholine head group of phosphatidylcholine (PC) on to ceramide (CER) to form ceramide phosphocholine (sphingomyelin, SM) and diacylglycerol (DAG) as by-product, and in the reverse reaction transfers phosphocholine from SM to DAG to form PC and CER. The direction of the reaction depends on the levels of CER and DAG in Golgi membranes. Converts the newly synthesized CER, that is transported from the endoplasmic reticulum to the trans-Golgi by the Cer transport protein (CERT), to SM. Can form a heteromeric complex with glucosylceramide synthase (GCS) increasing SMS activity and reducing glucosylceramide synthesis, a critical mechanism that controls the metabolic fate of CER in the Golgi. Does not use free phosphorylcholine or CDP-choline as donor. Can also transfer phosphoethanolamine head group of phosphatidylethanolamine (PE) on to CER to form ceramide phosphoethanolamine (CPE). Regulates receptor-mediated signal transduction via mitogenic DAG and proapoptotic CER, as well as via SM, a structural component of membrane rafts that serve as platforms for signal transduction and protein sorting. Plays a role in secretory transport via regulation of DAG pool at the Golgi apparatus and its downstream effects on PRKD1. The protein is Phosphatidylcholine:ceramide cholinephosphotransferase 1 (SGMS1) of Homo sapiens (Human).